The chain runs to 327 residues: Probable cell division protein WhiA (327 aa).

The H-T-H motif DNA-binding region spans serine 275–lysine 308.

This sequence belongs to the WhiA family.

Functionally, involved in cell division and chromosome segregation. The protein is Probable cell division protein WhiA of Mycobacterium avium (strain 104).